The primary structure comprises 158 residues: NAD(P)H-quinone oxidoreductase subunit J, chloroplastic (158 aa).

Belongs to the complex I 30 kDa subunit family. In terms of assembly, NDH is composed of at least 16 different subunits, 5 of which are encoded in the nucleus.

It is found in the plastid. Its subcellular location is the chloroplast thylakoid membrane. It carries out the reaction a plastoquinone + NADH + (n+1) H(+)(in) = a plastoquinol + NAD(+) + n H(+)(out). The catalysed reaction is a plastoquinone + NADPH + (n+1) H(+)(in) = a plastoquinol + NADP(+) + n H(+)(out). NDH shuttles electrons from NAD(P)H:plastoquinone, via FMN and iron-sulfur (Fe-S) centers, to quinones in the photosynthetic chain and possibly in a chloroplast respiratory chain. The immediate electron acceptor for the enzyme in this species is believed to be plastoquinone. Couples the redox reaction to proton translocation, and thus conserves the redox energy in a proton gradient. The sequence is that of NAD(P)H-quinone oxidoreductase subunit J, chloroplastic from Lupinus luteus (European yellow lupine).